The primary structure comprises 420 residues: Aminoacyltransferase FemA (420 aa).

The protein belongs to the FemABX family. As to quaternary structure, homodimer. Interacts with FemB.

It is found in the cytoplasm. The catalysed reaction is beta-D-GlcNAc-(1-&gt;4)-Mur2Ac(oyl-L-Ala-D-isoglutaminyl-L-Lys-(N(6)-Gly)-D-Ala-D-Ala)-di-trans,octa-cis-undecaprenyl diphosphate + 2 glycyl-tRNA(Gly) = MurNAc-L-Ala-D-isoglutaminyl-L-Lys-(N(6)-tri-Gly)-D-Ala-D-Ala-diphospho-di-trans,octa-cis-undecaprenyl-GlcNAc + 2 tRNA(Gly) + 2 H(+). Catalyzes the formation of the pentaglycine interpeptide bridge, which is characteristic of the S.aureus peptidoglycan. Adds glycines 2 and 3 of the pentaglycine bridge, using glycyl-tRNA(Gly) as donor. Involved in resistance to methicillin. In Staphylococcus aureus (strain Mu50 / ATCC 700699), this protein is Aminoacyltransferase FemA (femA).